Reading from the N-terminus, the 279-residue chain is Tryptophan synthase alpha chain (279 aa).

Active-site proton acceptor residues include Glu-50 and Asp-61.

This sequence belongs to the TrpA family. As to quaternary structure, tetramer of two alpha and two beta chains.

The enzyme catalyses (1S,2R)-1-C-(indol-3-yl)glycerol 3-phosphate + L-serine = D-glyceraldehyde 3-phosphate + L-tryptophan + H2O. It participates in amino-acid biosynthesis; L-tryptophan biosynthesis; L-tryptophan from chorismate: step 5/5. Its function is as follows. The alpha subunit is responsible for the aldol cleavage of indoleglycerol phosphate to indole and glyceraldehyde 3-phosphate. The chain is Tryptophan synthase alpha chain from Sinorhizobium medicae (strain WSM419) (Ensifer medicae).